We begin with the raw amino-acid sequence, 481 residues long: MKVTLPDFRRAGVLVVGDVMLDRYWYGPTSRISPEAPVPIVKVDAIEERPGGAANVAMNIAALGCHSRLVGLTGIDDAARALGARLSEVDVTCDFVAVATHPTVTKLRVLSRNQQLIRLDFEQGFDDVDAAPMIERIQLALPKTGALVLSDYAKGALARVREMITLARAAGVPVLVDPKGTDFDRYRGATLLTPNLSEFEAVAGPCKDEETLVSRGMKLIADYQLSALLITRSEQGMTLLQPGKDPLHLPTQAQEVYDVTGAGDTVIGVLAAALAAGNSLEDSCFLANAAAGVVVGKLGTSTVSPIELENAIRGRAETGFGVMTESELKQAVAVARQRGEKVVMTNGIFDILHAGHVSYLANAQRLGDRLIVAVNSDESTKRLKGESRPVNPLAQRMTVLAALEAVDWVVPFSEDTPQRLIADVLPDVLVKGGDYQPHQIAGSKEVWDNGGDVLVLNFEDGCSTTNIINAIKRRAGQRTVV.

The interval 1–318 (MKVTLPDFRR…ENAIRGRAET (318 aa)) is ribokinase. 195–198 (NLSE) is a binding site for ATP. The active site involves D264. Residues 344-481 (MTNGIFDILH…KRRAGQRTVV (138 aa)) form a cytidylyltransferase region.

The protein in the N-terminal section; belongs to the carbohydrate kinase PfkB family. In the C-terminal section; belongs to the cytidylyltransferase family. In terms of assembly, homodimer.

The enzyme catalyses D-glycero-beta-D-manno-heptose 7-phosphate + ATP = D-glycero-beta-D-manno-heptose 1,7-bisphosphate + ADP + H(+). It carries out the reaction D-glycero-beta-D-manno-heptose 1-phosphate + ATP + H(+) = ADP-D-glycero-beta-D-manno-heptose + diphosphate. The protein operates within nucleotide-sugar biosynthesis; ADP-L-glycero-beta-D-manno-heptose biosynthesis; ADP-L-glycero-beta-D-manno-heptose from D-glycero-beta-D-manno-heptose 7-phosphate: step 1/4. Its pathway is nucleotide-sugar biosynthesis; ADP-L-glycero-beta-D-manno-heptose biosynthesis; ADP-L-glycero-beta-D-manno-heptose from D-glycero-beta-D-manno-heptose 7-phosphate: step 3/4. Catalyzes the phosphorylation of D-glycero-D-manno-heptose 7-phosphate at the C-1 position to selectively form D-glycero-beta-D-manno-heptose-1,7-bisphosphate. Its function is as follows. Catalyzes the ADP transfer from ATP to D-glycero-beta-D-manno-heptose 1-phosphate, yielding ADP-D-glycero-beta-D-manno-heptose. In Sodalis glossinidius (strain morsitans), this protein is Bifunctional protein HldE.